A 430-amino-acid chain; its full sequence is Enolase (430 aa).

Residue glutamine 167 coordinates (2R)-2-phosphoglycerate. Glutamate 209 functions as the Proton donor in the catalytic mechanism. Positions 245, 286, and 313 each coordinate Mg(2+). (2R)-2-phosphoglycerate is bound by residues lysine 338, arginine 367, serine 368, and lysine 389. Catalysis depends on lysine 338, which acts as the Proton acceptor.

This sequence belongs to the enolase family. Mg(2+) serves as cofactor.

The protein resides in the cytoplasm. It is found in the secreted. It localises to the cell surface. The catalysed reaction is (2R)-2-phosphoglycerate = phosphoenolpyruvate + H2O. The protein operates within carbohydrate degradation; glycolysis; pyruvate from D-glyceraldehyde 3-phosphate: step 4/5. In terms of biological role, catalyzes the reversible conversion of 2-phosphoglycerate (2-PG) into phosphoenolpyruvate (PEP). It is essential for the degradation of carbohydrates via glycolysis. The chain is Enolase from Synechococcus sp. (strain CC9311).